Consider the following 280-residue polypeptide: Shikimate dehydrogenase (NADP(+)) (280 aa).

Residues 23–25 (SLS) and threonine 70 each bind shikimate. The active-site Proton acceptor is lysine 74. Shikimate-binding residues include asparagine 95 and aspartate 111. NADP(+)-binding positions include 135–139 (GSGGA), 158–163 (NRTISK), and isoleucine 221. Shikimate is bound at residue tyrosine 223. Glycine 247 provides a ligand contact to NADP(+).

It belongs to the shikimate dehydrogenase family. Homodimer.

It catalyses the reaction shikimate + NADP(+) = 3-dehydroshikimate + NADPH + H(+). It functions in the pathway metabolic intermediate biosynthesis; chorismate biosynthesis; chorismate from D-erythrose 4-phosphate and phosphoenolpyruvate: step 4/7. Its function is as follows. Involved in the biosynthesis of the chorismate, which leads to the biosynthesis of aromatic amino acids. Catalyzes the reversible NADPH linked reduction of 3-dehydroshikimate (DHSA) to yield shikimate (SA). The chain is Shikimate dehydrogenase (NADP(+)) from Buchnera aphidicola subsp. Cinara cedri (strain Cc).